Reading from the N-terminus, the 156-residue chain is Cyclin-dependent protein kinase inhibitor SMR10 (156 aa).

The interval 52 to 90 is disordered; it reads QDQDLEPKSQETNNCSRKEGATVKKEEEEEDDYCKTPTR. Residues 67-77 are compositionally biased toward basic and acidic residues; sequence SRKEGATVKKE.

Probable cyclin-dependent protein kinase (CDK) inhibitor that functions as a repressor of mitosis in the endoreduplication cell cycle. The polypeptide is Cyclin-dependent protein kinase inhibitor SMR10 (Arabidopsis thaliana (Mouse-ear cress)).